Here is a 199-residue protein sequence, read N- to C-terminus: CASP-like protein 2B1 (199 aa).

Topologically, residues 1-26 (MSYLGVGLSPVNVAGTKMKLMDRKVR) are cytoplasmic. A helical membrane pass occupies residues 27–47 (LTELILRCSVCALALVAAILI). Residues 48-69 (ATDTQVKEIFTIQKKAKYTDMK) lie on the Extracellular side of the membrane. A helical transmembrane segment spans residues 70-90 (ALVFLVVVNGIAAAYSLLHMV). Topologically, residues 91–106 (RCVVGMMKGSVLFSKP) are cytoplasmic. The chain crosses the membrane as a helical span at residues 107-127 (LAWAIFSGDQAIAYLTVAGVA). Topologically, residues 128 to 164 (AAAQSAAFAKLGEPELQWMKICTIYGKFCNQVGEGIA) are extracellular. A helical membrane pass occupies residues 165–185 (TALLASIGMVLISSISAFALF). Residues 186–199 (RLYGGNKAQQGSRW) are Cytoplasmic-facing.

This sequence belongs to the Casparian strip membrane proteins (CASP) family. In terms of assembly, homodimer and heterodimers.

The protein localises to the cell membrane. This is CASP-like protein 2B1 from Eutrema halophilum (Salt cress).